The following is a 154-amino-acid chain: 20 kDa calcium-binding protein (154 aa).

EF-hand domains lie at 13–48 (DQVK…LNLT), 49–84 (VKPD…KLQE), 86–121 (QDER…LGDD), and 122–154 (LTEE…MTSE). 11 residues coordinate Ca(2+): Asp62, Asp64, Thr66, Asp99, Asn101, Glu105, Asp110, Asp135, Asp137, Ser139, and Glu146.

Its subcellular location is the tegument membrane. Calcium-binding protein. This chain is 20 kDa calcium-binding protein (SM20), found in Schistosoma mansoni (Blood fluke).